Consider the following 70-residue polypeptide: Putative membrane protein insertion efficiency factor (70 aa).

This sequence belongs to the UPF0161 family.

The protein resides in the cell inner membrane. Could be involved in insertion of integral membrane proteins into the membrane. This chain is Putative membrane protein insertion efficiency factor, found in Methylobacillus flagellatus (strain ATCC 51484 / DSM 6875 / VKM B-1610 / KT).